The chain runs to 456 residues: Bifunctional protein GlmU (456 aa).

Residues Met-1–Arg-229 are pyrophosphorylase. UDP-N-acetyl-alpha-D-glucosamine contacts are provided by residues Leu-11–Gly-14, Lys-25, Gln-76, Gly-81–Thr-82, Tyr-103–Asp-105, Gly-140, Glu-154, Asn-169, and Asn-227. Asp-105 is a Mg(2+) binding site. Residue Asn-227 participates in Mg(2+) binding. Residues Leu-230–Ala-250 are linker. Residues Gly-251 to Lys-456 are N-acetyltransferase. 2 residues coordinate UDP-N-acetyl-alpha-D-glucosamine: Arg-333 and Lys-351. Residue His-363 is the Proton acceptor of the active site. Tyr-366 and Asn-377 together coordinate UDP-N-acetyl-alpha-D-glucosamine. Acetyl-CoA contacts are provided by residues Ala-380, Asn-386–Tyr-387, Ser-405, Ala-423, and Arg-440.

It in the N-terminal section; belongs to the N-acetylglucosamine-1-phosphate uridyltransferase family. This sequence in the C-terminal section; belongs to the transferase hexapeptide repeat family. Homotrimer. Mg(2+) is required as a cofactor.

It localises to the cytoplasm. It catalyses the reaction alpha-D-glucosamine 1-phosphate + acetyl-CoA = N-acetyl-alpha-D-glucosamine 1-phosphate + CoA + H(+). It carries out the reaction N-acetyl-alpha-D-glucosamine 1-phosphate + UTP + H(+) = UDP-N-acetyl-alpha-D-glucosamine + diphosphate. The protein operates within nucleotide-sugar biosynthesis; UDP-N-acetyl-alpha-D-glucosamine biosynthesis; N-acetyl-alpha-D-glucosamine 1-phosphate from alpha-D-glucosamine 6-phosphate (route II): step 2/2. It functions in the pathway nucleotide-sugar biosynthesis; UDP-N-acetyl-alpha-D-glucosamine biosynthesis; UDP-N-acetyl-alpha-D-glucosamine from N-acetyl-alpha-D-glucosamine 1-phosphate: step 1/1. Its pathway is bacterial outer membrane biogenesis; LPS lipid A biosynthesis. Functionally, catalyzes the last two sequential reactions in the de novo biosynthetic pathway for UDP-N-acetylglucosamine (UDP-GlcNAc). The C-terminal domain catalyzes the transfer of acetyl group from acetyl coenzyme A to glucosamine-1-phosphate (GlcN-1-P) to produce N-acetylglucosamine-1-phosphate (GlcNAc-1-P), which is converted into UDP-GlcNAc by the transfer of uridine 5-monophosphate (from uridine 5-triphosphate), a reaction catalyzed by the N-terminal domain. This chain is Bifunctional protein GlmU, found in Klebsiella pneumoniae subsp. pneumoniae (strain ATCC 700721 / MGH 78578).